We begin with the raw amino-acid sequence, 193 residues long: Xanthine phosphoribosyltransferase (193 aa).

Xanthine contacts are provided by Leu-20 and Asn-27. 128–132 (ANGDA) provides a ligand contact to 5-phospho-alpha-D-ribose 1-diphosphate. Residue Lys-156 participates in xanthine binding.

This sequence belongs to the purine/pyrimidine phosphoribosyltransferase family. Xpt subfamily. In terms of assembly, homodimer.

It is found in the cytoplasm. It catalyses the reaction XMP + diphosphate = xanthine + 5-phospho-alpha-D-ribose 1-diphosphate. It functions in the pathway purine metabolism; XMP biosynthesis via salvage pathway; XMP from xanthine: step 1/1. In terms of biological role, converts the preformed base xanthine, a product of nucleic acid breakdown, to xanthosine 5'-monophosphate (XMP), so it can be reused for RNA or DNA synthesis. This is Xanthine phosphoribosyltransferase from Staphylococcus saprophyticus subsp. saprophyticus (strain ATCC 15305 / DSM 20229 / NCIMB 8711 / NCTC 7292 / S-41).